An 83-amino-acid polypeptide reads, in one-letter code: RNA-binding protein Hfq (83 aa).

One can recognise a Sm domain in the interval 9 to 69 (DQLLNTARKE…ISTIIPAKPI (61 aa)).

This sequence belongs to the Hfq family. As to quaternary structure, homohexamer.

Its function is as follows. RNA chaperone that binds small regulatory RNA (sRNAs) and mRNAs to facilitate mRNA translational regulation in response to envelope stress, environmental stress and changes in metabolite concentrations. Also binds with high specificity to tRNAs. The chain is RNA-binding protein Hfq from Leptospira biflexa serovar Patoc (strain Patoc 1 / Ames).